The sequence spans 134 residues: SNAPIN protein homolog (134 aa).

Residues 50–124 adopt a coiled-coil conformation; it reads QLQAELRGQL…EKEQRRRQAL (75 aa).

This sequence belongs to the SNAPIN family. As to quaternary structure, component of the biogenesis of lysosome-related organelles complex-1 (BLOC-1) composed of Blos1, Blos2, Blos3, Blos4, Dysb, Muted, Pldn and Snapin. Interacts with Blos2 and Dysb.

The protein localises to the membrane. Its subcellular location is the cytoplasm. It is found in the cytosol. In terms of biological role, component of the biogenesis of lysosome-related organelles complex-1 (BLOC-1) involved in pigment granule biogenesis. May participate in the coupling of lysosomes to microtubule plus-end-directed kinesin motor. This chain is SNAPIN protein homolog, found in Drosophila melanogaster (Fruit fly).